The chain runs to 573 residues: Glucocorticoid modulatory element-binding protein 1 (573 aa).

A2 is subject to N-acetylalanine. In terms of domain architecture, SAND spans 82-166 (TGTIEANEDM…RKMMDSGQID (85 aa)). C113 serves as a coordination point for Zn(2+). DNA contacts are provided by K139, K143, K146, and R157. The Zn(2+) site is built by H170, C174, and C178. Residues 321–367 (LDNRRNQVEQGEEQFLYTLTDLERQLEEQKKQGQDHRLKSQTVQNVV) adopt a coiled-coil conformation. Residues 370-398 (PVSTPKPPKRPRLQRPASTTVLSPSPPVQ) form a disordered region.

As to quaternary structure, homodimer, and heterodimer of GMEB1 and GMEB2. GMEB1 and GMEB2 form the parvovirus initiator complex (PIF). Interacts with the glucocorticoid receptor (NR3C1) and NCOA2/TIF2. May interact with HSP27 and CREB-binding protein (CBP).

It is found in the nucleus. The protein resides in the cytoplasm. Functionally, trans-acting factor that binds to glucocorticoid modulatory elements (GME) present in the TAT (tyrosine aminotransferase) promoter and increases sensitivity to low concentrations of glucocorticoids. Also binds to the transferrin receptor promoter. Essential auxiliary factor for the replication of parvoviruses. The sequence is that of Glucocorticoid modulatory element-binding protein 1 (GMEB1) from Homo sapiens (Human).